Here is a 463-residue protein sequence, read N- to C-terminus: ATP synthase subunit beta (463 aa).

An ATP-binding site is contributed by 152–159 (GGAGVGKT).

It belongs to the ATPase alpha/beta chains family. As to quaternary structure, F-type ATPases have 2 components, CF(1) - the catalytic core - and CF(0) - the membrane proton channel. CF(1) has five subunits: alpha(3), beta(3), gamma(1), delta(1), epsilon(1). CF(0) has three main subunits: a(1), b(2) and c(9-12). The alpha and beta chains form an alternating ring which encloses part of the gamma chain. CF(1) is attached to CF(0) by a central stalk formed by the gamma and epsilon chains, while a peripheral stalk is formed by the delta and b chains.

The protein resides in the cell inner membrane. It catalyses the reaction ATP + H2O + 4 H(+)(in) = ADP + phosphate + 5 H(+)(out). Functionally, produces ATP from ADP in the presence of a proton gradient across the membrane. The catalytic sites are hosted primarily by the beta subunits. The polypeptide is ATP synthase subunit beta (Shewanella putrefaciens (strain CN-32 / ATCC BAA-453)).